Consider the following 493-residue polypeptide: EGF-containing fibulin-like extracellular matrix protein 1 (493 aa).

The first 17 residues, 1 to 17, serve as a signal peptide directing secretion; it reads MLKALFLTMLTLALVKS. The EGF-like 1; atypical domain maps to 26-71; that stretch reads YTQCTDGYEWDPVRQQCKDIDECDIVPDACKGGMKCVNHYGGYLCL. One can recognise an EGF-like 2; calcium-binding domain in the interval 173-213; the sequence is DIDECTAGTHNCRADQVCINLRGSFACQCPPGYQKRGEQCV. 15 cysteine pairs are disulfide-bonded: Cys-177-Cys-190, Cys-184-Cys-199, Cys-201-Cys-212, Cys-218-Cys-228, Cys-224-Cys-237, Cys-239-Cys-252, Cys-258-Cys-268, Cys-264-Cys-277, Cys-279-Cys-292, Cys-298-Cys-309, Cys-305-Cys-318, Cys-320-Cys-332, Cys-338-Cys-350, Cys-344-Cys-359, and Cys-365-Cys-377. The 40-residue stretch at 214-253 folds into the EGF-like 3; calcium-binding domain; sequence DIDECTIPPYCHQRCVNTPGSFYCQCSPGFQLAANNYTCV. Asn-249 carries N-linked (GlcNAc...) asparagine glycosylation. The 40-residue stretch at 254–293 folds into the EGF-like 4; calcium-binding domain; it reads DINECDASNQCAQQCYNILGSFICQCNQGYELSSDRLNCE. The segment at 259 to 493 is mediates interaction with TIMP3; sequence DASNQCAQQC…LTIIVGPFSF (235 aa). An EGF-like 5; calcium-binding domain is found at 294-333; the sequence is DIDECRTSSYLCQYQCVNEPGKFSCMCPQGYQVVRSRTCQ. The EGF-like 6; calcium-binding domain maps to 334 to 378; that stretch reads DINECETTNECREDEMCWNYHGGFRCYPRNPCQDPYILTPENRCV.

It belongs to the fibulin family. Interacts with ECM1. Interacts with TIMP3.

The protein localises to the secreted. It is found in the extracellular space. The protein resides in the extracellular matrix. In terms of biological role, binds EGFR, the EGF receptor, inducing EGFR autophosphorylation and the activation of downstream signaling pathways. May play a role in cell adhesion and migration. May function as a negative regulator of chondrocyte differentiation. In the olfactory epithelium, it may regulate glial cell migration, differentiation and the ability of glial cells to support neuronal neurite outgrowth. This chain is EGF-containing fibulin-like extracellular matrix protein 1 (EFEMP1), found in Macaca fascicularis (Crab-eating macaque).